The following is a 164-amino-acid chain: CDP-archaeol synthase (164 aa).

Transmembrane regions (helical) follow at residues 3–23 (LTVF…AVFA), 55–75 (AIGI…YHVI), 77–97 (VFDA…GAFI), and 122–142 (FLVY…AVVI).

The protein belongs to the CDP-archaeol synthase family. The cofactor is Mg(2+).

The protein resides in the cell membrane. The catalysed reaction is 2,3-bis-O-(geranylgeranyl)-sn-glycerol 1-phosphate + CTP + H(+) = CDP-2,3-bis-O-(geranylgeranyl)-sn-glycerol + diphosphate. Its pathway is membrane lipid metabolism; glycerophospholipid metabolism. Catalyzes the formation of CDP-2,3-bis-(O-geranylgeranyl)-sn-glycerol (CDP-archaeol) from 2,3-bis-(O-geranylgeranyl)-sn-glycerol 1-phosphate (DGGGP) and CTP. This reaction is the third ether-bond-formation step in the biosynthesis of archaeal membrane lipids. The chain is CDP-archaeol synthase from Pyrobaculum aerophilum (strain ATCC 51768 / DSM 7523 / JCM 9630 / CIP 104966 / NBRC 100827 / IM2).